Reading from the N-terminus, the 126-residue chain is Holo-[acyl-carrier-protein] synthase (126 aa).

Mg(2+) is bound by residues D8 and E57.

Belongs to the P-Pant transferase superfamily. AcpS family. The cofactor is Mg(2+).

The protein resides in the cytoplasm. The catalysed reaction is apo-[ACP] + CoA = holo-[ACP] + adenosine 3',5'-bisphosphate + H(+). Transfers the 4'-phosphopantetheine moiety from coenzyme A to a Ser of acyl-carrier-protein. This chain is Holo-[acyl-carrier-protein] synthase, found in Geobacter sulfurreducens (strain ATCC 51573 / DSM 12127 / PCA).